The sequence spans 860 residues: Ribosome-releasing factor 2, mitochondrial (860 aa).

One can recognise a tr-type G domain in the interval 45 to 337 (DRTRNIGIIA…AVVNFLPSPL (293 aa)). GTP contacts are provided by residues 54-61 (AHIDAGKT), 118-122 (DTPGH), and 172-175 (NKMD).

This sequence belongs to the TRAFAC class translation factor GTPase superfamily. Classic translation factor GTPase family. EF-G/EF-2 subfamily.

The protein localises to the mitochondrion. Mitochondrial GTPase that mediates the disassembly of ribosomes from messenger RNA at the termination of mitochondrial protein biosynthesis. Not involved in the GTP-dependent ribosomal translocation step during translation elongation. The chain is Ribosome-releasing factor 2, mitochondrial from Debaryomyces hansenii (strain ATCC 36239 / CBS 767 / BCRC 21394 / JCM 1990 / NBRC 0083 / IGC 2968) (Yeast).